A 217-amino-acid chain; its full sequence is Probable transaldolase (217 aa).

Catalysis depends on Lys83, which acts as the Schiff-base intermediate with substrate.

This sequence belongs to the transaldolase family. Type 3B subfamily.

It is found in the cytoplasm. The enzyme catalyses D-sedoheptulose 7-phosphate + D-glyceraldehyde 3-phosphate = D-erythrose 4-phosphate + beta-D-fructose 6-phosphate. The protein operates within carbohydrate degradation; pentose phosphate pathway; D-glyceraldehyde 3-phosphate and beta-D-fructose 6-phosphate from D-ribose 5-phosphate and D-xylulose 5-phosphate (non-oxidative stage): step 2/3. Transaldolase is important for the balance of metabolites in the pentose-phosphate pathway. This is Probable transaldolase from Rhizobium meliloti (strain 1021) (Ensifer meliloti).